The following is a 344-amino-acid chain: Heat-inducible transcription repressor HrcA (344 aa).

Belongs to the HrcA family.

In terms of biological role, negative regulator of class I heat shock genes (grpE-dnaK-dnaJ and groELS operons). Prevents heat-shock induction of these operons. The sequence is that of Heat-inducible transcription repressor HrcA from Corynebacterium aurimucosum (strain ATCC 700975 / DSM 44827 / CIP 107346 / CN-1) (Corynebacterium nigricans).